The chain runs to 414 residues: Protein phosphatase 2C homolog 3 (414 aa).

In terms of domain architecture, PPM-type phosphatase spans 23–288; it reads LYGLSSMQGW…DNMTVCIVAL (266 aa). Mn(2+) contacts are provided by aspartate 62, glycine 63, aspartate 230, and aspartate 279. Disordered stretches follow at residues 313–368 and 380–414; these read APPE…TNGS and FPHK…SAAD. Residues 350–363 show a composition bias toward basic and acidic residues; sequence GYDKDANENSKEDD. Residues 390-400 show a composition bias toward polar residues; sequence SSETDIVNSNK. The span at 401–414 shows a compositional bias: basic and acidic residues; sequence DVADDHKEAVSAAD.

It belongs to the PP2C family. As to quaternary structure, monomer. The cofactor is Mg(2+). Mn(2+) serves as cofactor.

It is found in the cytoplasm. The protein localises to the nucleus. It catalyses the reaction O-phospho-L-seryl-[protein] + H2O = L-seryl-[protein] + phosphate. The catalysed reaction is O-phospho-L-threonyl-[protein] + H2O = L-threonyl-[protein] + phosphate. Dephosphorylating regulator for many key proteins. Has an important role in osmotic stability and cell shape control. It may negatively regulate the osmosensing signal transmitted through wis1 map kinase. The protein is Protein phosphatase 2C homolog 3 (ptc3) of Schizosaccharomyces pombe (strain 972 / ATCC 24843) (Fission yeast).